The primary structure comprises 83 residues: Bublin coiled-coil protein (83 aa).

The interval 1-25 (MSGPNGDLGMPVDAGTEGENDSFGE) is disordered. The stretch at 25-74 (EAEYAAINSMLDQINSCLDHLEEKNDHLHARLQELLESNRQTRLEFQQQL) forms a coiled coil. Ser82 is subject to Phosphoserine.

The protein belongs to the UPF0184 (EST00098) family.

It localises to the cell junction. The protein resides in the cytoplasm. It is found in the cytoskeleton. In terms of biological role, essential for intermediate filament organization in intestinal cells, interacts with intermediate filament and regulates intestinal lumen morphology. This Mus musculus (Mouse) protein is Bublin coiled-coil protein.